The chain runs to 241 residues: Cysteine-rich secretory protein 3 (241 aa).

Positions 1–19 are cleaved as a signal peptide; the sequence is MALMLVLFFLAAVLPPSLL. The SCP domain occupies 44–170; that stretch reads SKHNQLRRKV…PLRYFYVCRY (127 aa). Asparagine 118, asparagine 132, and asparagine 175 each carry an N-linked (GlcNAc...) asparagine glycan. 5 cysteine pairs are disulfide-bonded: cysteine 194-cysteine 201, cysteine 197-cysteine 206, cysteine 210-cysteine 241, cysteine 219-cysteine 235, and cysteine 226-cysteine 239. Positions 210 to 241 constitute a ShKT domain; the sequence is CQYKDMSFWCKRLEYVCKHPGLKKRCLATCQC.

Belongs to the CRISP family. In terms of assembly, interacts with A1BG. Interacts with KNG1 isoform LMW. As to expression, expressed in submandibular gland.

It is found in the cytoplasmic vesicle. The protein resides in the secretory vesicle. This protein is supposed to help spermatozoa undergo functional maturation while they move from the testis to the ductus deferens. The sequence is that of Cysteine-rich secretory protein 3 (Crisp3) from Mus musculus (Mouse).